Consider the following 551-residue polypeptide: Oleuropein beta-glucosidase (551 aa).

The span at 1–27 (MDIQSNVLTITSGSTPTDTSSNGQAAK) shows a compositional bias: polar residues. Positions 1–33 (MDIQSNVLTITSGSTPTDTSSNGQAAKSTKERI) are disordered. A beta-D-glucoside is bound by residues glutamine 52, histidine 156, 201–202 (NE), tyrosine 363, glutamate 433, tryptophan 482, 489–490 (EW), and phenylalanine 498. Glutamate 202 serves as the catalytic Proton donor. The active-site Nucleophile is glutamate 433. The interval 502–551 (YVDYANGRYTRLPKRSAVWWRNFLTKPTAVPLKNEPEKSEDRRKRLRGST) is required for the homomultimerization. A disordered region spans residues 532 to 551 (PLKNEPEKSEDRRKRLRGST). Residues 535–544 (NEPEKSEDRR) are compositionally biased toward basic and acidic residues. The Nuclear localization signal signature appears at 542-550 (DRRKRLRGS).

It belongs to the glycosyl hydrolase 1 family. In terms of assembly, homomultimer. Native form of the enzyme requires at least an octamer conformation. Expressed in expanding leaves and in young drupes, mostly in the developing seed coat tissues, the perisperm and the mesocarp. Also detected in shoot and root meristems, flower buds, developing ovaries and tapetal cells of the anther. Not detected in embryos or endosperm, or in leaf trichomes.

Its subcellular location is the nucleus. It catalyses the reaction oleuropein + H2O = oleuropein aglycone + D-glucose. Functionally, major beta-glucosidase activating oleuropein into a potent protein cross-linking agent. No activity with rutin, luteolin or p-nitrophenyl-beta-glucopyranoside as substrates. This is Oleuropein beta-glucosidase from Olea europaea (Common olive).